Here is a 203-residue protein sequence, read N- to C-terminus: Guanylate kinase (203 aa).

Residues glycine 3–glutamine 181 enclose the Guanylate kinase-like domain. An ATP-binding site is contributed by alanine 10 to threonine 17.

It belongs to the guanylate kinase family.

The protein resides in the cytoplasm. The catalysed reaction is GMP + ATP = GDP + ADP. Its function is as follows. Essential for recycling GMP and indirectly, cGMP. This Nitrosococcus oceani (strain ATCC 19707 / BCRC 17464 / JCM 30415 / NCIMB 11848 / C-107) protein is Guanylate kinase.